The sequence spans 200 residues: NADH-quinone oxidoreductase subunit C (200 aa).

This sequence belongs to the complex I 30 kDa subunit family. In terms of assembly, NDH-1 is composed of 14 different subunits. Subunits NuoB, C, D, E, F, and G constitute the peripheral sector of the complex.

It localises to the cell inner membrane. The enzyme catalyses a quinone + NADH + 5 H(+)(in) = a quinol + NAD(+) + 4 H(+)(out). In terms of biological role, NDH-1 shuttles electrons from NADH, via FMN and iron-sulfur (Fe-S) centers, to quinones in the respiratory chain. The immediate electron acceptor for the enzyme in this species is believed to be ubiquinone. Couples the redox reaction to proton translocation (for every two electrons transferred, four hydrogen ions are translocated across the cytoplasmic membrane), and thus conserves the redox energy in a proton gradient. This chain is NADH-quinone oxidoreductase subunit C, found in Ralstonia nicotianae (strain ATCC BAA-1114 / GMI1000) (Ralstonia solanacearum).